Reading from the N-terminus, the 154-residue chain is Large ribosomal subunit protein bL9c (154 aa).

The protein belongs to the bacterial ribosomal protein bL9 family.

It is found in the plastid. Its subcellular location is the chloroplast. In terms of biological role, binds to the 23S rRNA. The protein is Large ribosomal subunit protein bL9c of Gracilaria tenuistipitata var. liui (Red alga).